Consider the following 400-residue polypeptide: Serine/threonine transporter SstT (400 aa).

A run of 9 helical transmembrane segments spans residues 14–34 (IIIA…VTPY), 48–68 (SVAP…FQVG), 76–96 (VLLL…IASL), 136–156 (AISE…GLAM), 177–197 (IIHK…AVTF), 211–231 (LLAV…PILV), 285–305 (IPLG…VLTL), 311–331 (LGIH…TISA), and 349–371 (CSLF…IISV).

This sequence belongs to the dicarboxylate/amino acid:cation symporter (DAACS) (TC 2.A.23) family.

Its subcellular location is the cell inner membrane. The enzyme catalyses L-serine(in) + Na(+)(in) = L-serine(out) + Na(+)(out). The catalysed reaction is L-threonine(in) + Na(+)(in) = L-threonine(out) + Na(+)(out). Involved in the import of serine and threonine into the cell, with the concomitant import of sodium (symport system). This chain is Serine/threonine transporter SstT, found in Acinetobacter baumannii (strain ATCC 17978 / DSM 105126 / CIP 53.77 / LMG 1025 / NCDC KC755 / 5377).